The sequence spans 429 residues: Growth/differentiation factor 2 (429 aa).

A signal peptide spans 1–22; that stretch reads MCPGALWVALPLLSLLAGSLQG. A propeptide spanning residues 23 to 319 is cleaved from the precursor; that stretch reads KPLQSWGRGS…AGSTLARRKR (297 aa). Asn-71 and Asn-136 each carry an N-linked (GlcNAc...) asparagine glycan. Positions 283–301 are enriched in basic and acidic residues; sequence VLKKLSKDGSTEAGESSHE. The interval 283 to 308 is disordered; the sequence is VLKKLSKDGSTEAGESSHEEDTDGHV. Cystine bridges form between Cys-327–Cys-393, Cys-356–Cys-426, and Cys-360–Cys-428. The segment at 402 to 416 is interaction with ENG; the sequence is SVLYKDDMGVPTLKY.

Belongs to the TGF-beta family. In terms of assembly, homodimer; disulfide-linked. Detected in extracellular fluid as mature homodimer, and in complex with its propeptide. Interacts with ACVRL1, BMPR2 and ACVR2B with high affinity (in vitro). Identified in a complex with ACVRL1 and ACVR2B. Has ten times lower affinity for ACVR2A (in vitro). Interacts with ENG, forming a heterotetramer with a 2:2 stoichiometry. Can form a heteromeric complex with ENG and ACVRL1. Interacts with type I receptor ACVR1. A reversible disulfide bond can be formed between the two subunits in the homodimer; this has no effect on GDF2 activity. In terms of tissue distribution, detected in blood plasma (at protein level).

It localises to the secreted. Potent circulating inhibitor of angiogenesis. Signals through the type I activin receptor ACVRL1 but not other Alks. Signaling through SMAD1 in endothelial cells requires TGF-beta coreceptor endoglin/ENG. The polypeptide is Growth/differentiation factor 2 (GDF2) (Homo sapiens (Human)).